Here is a 282-residue protein sequence, read N- to C-terminus: ADP-ribosyl cyclase/cyclic ADP-ribose hydrolase (282 aa).

Positions 1 to 24 (MSPVAIVACVCLAVTLTRISPSEA) are cleaved as a signal peptide. 5 disulfide bridges follow: C39–C58, C75–C155, C136–C149, C230–C251, and C263–C272.

Belongs to the ADP-ribosyl cyclase family. Ovotestis.

Its subcellular location is the cytoplasmic vesicle. It catalyses the reaction NAD(+) = cyclic ADP-beta-D-ribose + nicotinamide + H(+). The catalysed reaction is NAD(+) + H2O = ADP-D-ribose + nicotinamide + H(+). It carries out the reaction nicotinate + NADP(+) = nicotinate-adenine dinucleotide phosphate + nicotinamide. With respect to regulation, activity is presumably regulated by its sequestration in vesicles before egg fertilization. After fertilization and upon NADase release, it could then be regulated via its potential phosphorylation sites. Functionally, synthesizes cyclic ADP-ribose (cADPR), a second messenger for calcium mobilization from endoplasmic reticulum. Might make the Ca(2+) mobilizer nicotinate-adenine dinucleotide phosphate. Does not have cADPR hydrolase activity. The chain is ADP-ribosyl cyclase/cyclic ADP-ribose hydrolase from Aplysia kurodai (Kuroda's sea hare).